An 837-amino-acid polypeptide reads, in one-letter code: Exonuclease 1 (837 aa).

An N-domain region spans residues 1-99 (MGIQGLLQFI…RSRRERRQSN (99 aa)). Residues D30, D78, E150, D152, D171, D173, and D225 each contribute to the Mg(2+) site. Residues 129–386 (MAHKVIKAAR…RLEVNSVSHA (258 aa)) are interaction with MSH3. An I-domain region spans residues 138–229 (RALGVDCLVA…ILSGCDYLAS (92 aa)). Disordered stretches follow at residues 345-367 (TMPA…PGTN) and 440-477 (IKEN…PSKM). Residues 387 to 488 (PQLKEKPSTL…NKFATFLQRR (102 aa)) form an interaction with MLH1 region. A compositionally biased stretch (polar residues) spans 449-462 (TSPNSSKMSKSCPD). The residue at position 480 (K480) is an N6-acetyllysine. The segment at 555–589 (NGTHNLSSQIPGNAAVSPEDEAQSSETSKLLGAMS) is disordered. Positions 556–565 (GTHNLSSQIP) are enriched in polar residues. A phosphoserine mark is found at S589 and S601. Positions 591–837 (PSLGTLRSCF…CVRAQRAIFH (247 aa)) are interaction with MSH2. The interval 608–740 (EFSRTPSPSA…GLCRSSSMDS (133 aa)) is disordered. 3 stretches are compositionally biased toward polar residues: residues 611 to 623 (RTPS…TLQQ), 665 to 690 (SSRS…SSRD), and 699 to 713 (NNKS…NSKQ). T612 carries the post-translational modification Phosphothreonine. Phosphoserine occurs at positions 614 and 666. A Phosphoserine modification is found at S737. The tract at residues 778–837 (LQTKISELWKNFGFKKDSEKLPSCKKPLSPVKDNIQLTPETEDEIFNKPECVRAQRAIFH) is interaction with MLH1.

This sequence belongs to the XPG/RAD2 endonuclease family. EXO1 subfamily. In terms of assembly, interacts with the MLH1-PMS2 heterodimer via MLH1. Interacts with MSH3. Interacts with the MSH2-MSH6 heterodimer via MSH2, and this interaction may increase the processivity of the 5'-&gt;3' exonuclease activity. Interacts with PCNA, and this interaction may both stimulate the cryptic 3'-&gt;5' exonuclease activity and suppress the 5'-&gt;3' exonuclease activity. Interacts with WRN, and this interaction stimulates both the 5'-&gt;3' exonuclease activity and cleavage of 5'-overhanging flap structures. Interacts with RECQL/RECQ1, and this interaction stimulates cleavage of 5'-overhanging flap structures. Interacts with DNA helicase ZGRF1; the interaction is increased following DNA damage induction. Mg(2+) serves as cofactor. Post-translationally, phosphorylated upon DNA damage and in response to agents stalling DNA replication, probably by ATM or ATR. As to expression, highly expressed in the spleen and testis. Also expressed in the bone marrow, brain, lung, lymph node and thymus.

Its subcellular location is the nucleus. Its function is as follows. 5'-&gt;3' double-stranded DNA exonuclease which may also possess a cryptic 3'-&gt;5' double-stranded DNA exonuclease activity. Functions in DNA mismatch repair (MMR) to excise mismatch-containing DNA tracts directed by strand breaks located either 5' or 3' to the mismatch. Also exhibits endonuclease activity against 5'-overhanging flap structures similar to those generated by displacement synthesis when DNA polymerase encounters the 5'-end of a downstream Okazaki fragment. Required for somatic hypermutation (SHM) and class switch recombination (CSR) of immunoglobulin genes. Essential for male and female meiosis. The polypeptide is Exonuclease 1 (Exo1) (Mus musculus (Mouse)).